The primary structure comprises 117 residues: Aspartate 1-decarboxylase (117 aa).

Catalysis depends on Ser25, which acts as the Schiff-base intermediate with substrate; via pyruvic acid. Ser25 carries the pyruvic acid (Ser) modification. Thr57 contributes to the substrate binding site. Catalysis depends on Tyr58, which acts as the Proton donor. 73-75 (GAA) serves as a coordination point for substrate.

Belongs to the PanD family. In terms of assembly, heterooctamer of four alpha and four beta subunits. Pyruvate serves as cofactor. Is synthesized initially as an inactive proenzyme, which is activated by self-cleavage at a specific serine bond to produce a beta-subunit with a hydroxyl group at its C-terminus and an alpha-subunit with a pyruvoyl group at its N-terminus.

It is found in the cytoplasm. It carries out the reaction L-aspartate + H(+) = beta-alanine + CO2. Its pathway is cofactor biosynthesis; (R)-pantothenate biosynthesis; beta-alanine from L-aspartate: step 1/1. Catalyzes the pyruvoyl-dependent decarboxylation of aspartate to produce beta-alanine. This Bacteroides thetaiotaomicron (strain ATCC 29148 / DSM 2079 / JCM 5827 / CCUG 10774 / NCTC 10582 / VPI-5482 / E50) protein is Aspartate 1-decarboxylase.